A 195-amino-acid polypeptide reads, in one-letter code: UPF0167 protein CbrC (195 aa).

Belongs to the UPF0167 family.

The protein is UPF0167 protein CbrC (cbrC) of Escherichia coli (strain K12).